The chain runs to 467 residues: 3-isopropylmalate dehydratase large subunit (467 aa).

Residues C347, C408, and C411 each coordinate [4Fe-4S] cluster.

Belongs to the aconitase/IPM isomerase family. LeuC type 1 subfamily. Heterodimer of LeuC and LeuD. [4Fe-4S] cluster serves as cofactor.

It catalyses the reaction (2R,3S)-3-isopropylmalate = (2S)-2-isopropylmalate. It functions in the pathway amino-acid biosynthesis; L-leucine biosynthesis; L-leucine from 3-methyl-2-oxobutanoate: step 2/4. Functionally, catalyzes the isomerization between 2-isopropylmalate and 3-isopropylmalate, via the formation of 2-isopropylmaleate. This Bordetella pertussis (strain Tohama I / ATCC BAA-589 / NCTC 13251) protein is 3-isopropylmalate dehydratase large subunit.